Reading from the N-terminus, the 1185-residue chain is Syntaxin-binding protein 5-like (1185 aa).

Residue M1 is modified to N-acetylmethionine. Residues 15–44 (ASSPGSGSSSGSNSGGAGSGSVHPGGTAGL) form a disordered region. The span at 16 to 26 (SSPGSGSSSGS) shows a compositional bias: low complexity. 10 WD repeats span residues 73–106 (TALA…CYCQ), 113–152 (VLQL…SLKF), 157–193 (ITYC…GYVI), 212–246 (HLSD…ELRV), 252–284 (IHSI…PSRP), 306–348 (PILK…KAIT), 356–390 (IVEF…VVDL), 412–489 (TCTA…YKLK), 517–628 (QMIY…DLVI), and 642–704 (TSLS…IADN). T567 is subject to Phosphothreonine. Residues 567 to 601 (TPEPETSPPFPDLSSQLPPSRSLSGSTNTVSSEGV) form a disordered region. A phosphoserine mark is found at S573, S588, and S592. The segment covering 578–592 (DLSSQLPPSRSLSGS) has biased composition (low complexity). T595 is subject to Phosphothreonine. Position 598 is a phosphoserine (S598). The residue at position 708 (R708) is an Omega-N-methylarginine. Positions 747–768 (TSDHVNGHCTSPTSQSCSSGKR) are enriched in polar residues. A disordered region spans residues 747 to 770 (TSDHVNGHCTSPTSQSCSSGKRLS). Residues S762, S764, S765, S770, S771, S792, S799, S811, S819, S821, and S822 each carry the phosphoserine modification. WD repeat units follow at residues 831–888 (ITAL…SGTF), 897–968 (TFSC…QTCL), 973–1017 (ITET…LDVN), and 1031–1054 (CFTN…TYSQ). Phosphothreonine is present on T1092. The v-SNARE coiled-coil homology domain maps to 1120–1180 (SIEGMKGAAG…HELMLKYKDK (61 aa)).

It belongs to the WD repeat L(2)GL family. In terms of assembly, interacts with STX1A and STX4. Post-translationally, phosphorylated, leading to STXBP5L increased turnover and subsequent de-repression of insulin secretion. Phosphorylated on serine residues in response to glucose or phorbol esters. Ubiquitinated by the E3 ligase SYVN1, leading to STXBP5L proteasomal degradation. Detected in hippocampus and cerebellum. Expressed in pancreatic beta-cells where it modulates insulin secretion.

The protein localises to the cytoplasm. It localises to the cell membrane. It is found in the membrane. In terms of biological role, plays a role in vesicle trafficking and exocytosis inhibition. In pancreatic beta-cells, inhibits insulin secretion probably by interacting with and regulating STX1A and STX4, key t-SNARE proteins involved in the fusion of insulin granules to the plasma membrane. Also plays a role in neurotransmitter release by inhibiting basal acetylcholine release from axon terminals and by preventing synaptic fatigue upon repetitive stimulation. Promotes as well axonal outgrowth. The sequence is that of Syntaxin-binding protein 5-like (Stxbp5l) from Mus musculus (Mouse).